The following is a 304-amino-acid chain: Ribosomal RNA small subunit methyltransferase H (304 aa).

S-adenosyl-L-methionine-binding positions include 36 to 38 (GGH), Asp53, Phe79, Asp98, and Gln105.

Belongs to the methyltransferase superfamily. RsmH family.

Its subcellular location is the cytoplasm. It catalyses the reaction cytidine(1402) in 16S rRNA + S-adenosyl-L-methionine = N(4)-methylcytidine(1402) in 16S rRNA + S-adenosyl-L-homocysteine + H(+). Functionally, specifically methylates the N4 position of cytidine in position 1402 (C1402) of 16S rRNA. This chain is Ribosomal RNA small subunit methyltransferase H, found in Myxococcus xanthus (strain DK1622).